The chain runs to 331 residues: Ribosomal RNA small subunit methyltransferase H (331 aa).

S-adenosyl-L-methionine is bound by residues 38-40, D56, F83, D100, and Q107; that span reads GGY. Residues 289 to 331 are disordered; the sequence is AELAENPRARSARLRVGVRTDAPAGKVDPQALGTPLIPKKGRR.

This sequence belongs to the methyltransferase superfamily. RsmH family.

The protein resides in the cytoplasm. It carries out the reaction cytidine(1402) in 16S rRNA + S-adenosyl-L-methionine = N(4)-methylcytidine(1402) in 16S rRNA + S-adenosyl-L-homocysteine + H(+). Specifically methylates the N4 position of cytidine in position 1402 (C1402) of 16S rRNA. The polypeptide is Ribosomal RNA small subunit methyltransferase H (Cereibacter sphaeroides (strain ATCC 17029 / ATH 2.4.9) (Rhodobacter sphaeroides)).